Reading from the N-terminus, the 281-residue chain is MEMO1 family protein Pars_0062 (281 aa).

The protein belongs to the MEMO1 family.

The chain is MEMO1 family protein Pars_0062 from Pyrobaculum arsenaticum (strain DSM 13514 / JCM 11321 / PZ6).